The following is a 502-amino-acid chain: MGLRALMLWLLAAAGLVRESLQGEFQRKLYKELLKNYNPLERPVANDSQPLTVYFTLSLMQIMDVDEKNQVLTTNIWLQMYWTDHYLQWNVSEYPGVKNVRFPDGLIWKPDILLYNSADERFDATFHTNVLVNSSGHCQYLPPGIFKSSCYIDVRWFPFDVQKCNLKFGSWTYGGWSLDLQMQEADISGYISNGEWDLVGIPGKRTESFYECCKEPYPDITFTVTMRRRTLYYGLNLLIPCVLISALALLVFLLPADSGEKISLGITVLLSLTVFMLLVAEIMPATSDSVPLIAQYFASTMIIVGLSVVVTVIVLQYHHHDPDGGKMPKWTRVILLNWCAWFLRMKRPGEDKVRPACQHKQRRCSLSSMEMNTVSGQQCSNGNMLYIGFRGLDGVHCTPTTDSGVICGRMTCSPTEEENLLHSGHPSEGDPDLAKILEEVRYIANRFRDQDEEEAICNEWKFAASVVDRLCLMAFSVFTIICTIGILMSAPNFVEAVSKDFA.

The signal sequence occupies residues 1-23 (MGLRALMLWLLAAAGLVRESLQG). Over 24-233 (EFQRKLYKEL…VTMRRRTLYY (210 aa)) the chain is Extracellular. Positions 42 and 44 each coordinate Ca(2+). 3 N-linked (GlcNAc...) asparagine glycosylation sites follow: asparagine 46, asparagine 90, and asparagine 133. A disulfide bridge links cysteine 150 with cysteine 164. Ca(2+) contacts are provided by threonine 172 and tyrosine 210. Cysteine 212 and cysteine 213 are oxidised to a cystine. A run of 3 helical transmembrane segments spans residues 234 to 254 (GLNL…VFLL), 262 to 282 (ISLG…VAEI), and 295 to 315 (QYFA…VIVL). The Cytoplasmic segment spans residues 316-469 (QYHHHDPDGG…WKFAASVVDR (154 aa)). A helical transmembrane segment spans residues 470 to 490 (LCLMAFSVFTIICTIGILMSA).

Belongs to the ligand-gated ion channel (TC 1.A.9) family. Acetylcholine receptor (TC 1.A.9.1) subfamily. Alpha-7/CHRNA7 sub-subfamily. In terms of assembly, homopentamer. Can also form heteropentamers with CHRNB2, mainly found in basal forebrain cholinergic neurons.

It localises to the postsynaptic cell membrane. It is found in the cell membrane. The enzyme catalyses Ca(2+)(in) = Ca(2+)(out). It carries out the reaction K(+)(in) = K(+)(out). The catalysed reaction is Na(+)(in) = Na(+)(out). It catalyses the reaction choline(out) = choline(in). The enzyme catalyses NH4(+)(in) = NH4(+)(out). It carries out the reaction L-arginine(in) = L-arginine(out). The catalysed reaction is guanidine(out) = guanidine(in). With respect to regulation, activated by a myriad of ligands such as acetylcholine, cytisine, nicotine, choline and epibatidine. Activity is modulated by positive allosteric modulators (PAMs), such as flavonoids, with a wide range of chemical diversity, pharmacological sensitivity and efficacy. AChR activity is inhibited by the antagonists alpha-conotoxons RgIA, ImI and ImII, small disulfide-constrained peptides from cone snails. Its function is as follows. Component of neuronal acetylcholine receptors (nAChRs) that function as pentameric, ligand-gated cation channels with high calcium permeability among other activities. nAChRs are excitatory neurotrasnmitter receptors formed by a collection of nAChR subunits known to mediate synaptic transmission in the nervous system and the neuromuscular junction. Each nAchR subunit confers differential attributes to channel properties, including activation, deactivation and desensitization kinetics, pH sensitivity, cation permeability, and binding to allosteric modulators. CHRNA7 is an homooligomeric neuronal acetylcholine receptor abundantly expressed in the central nervous system. Characterized by a fast desensitization and high calcium permeability. Also expressed in non-neuronal cells such as immune cells like lymphocytes, monocytes and macrophages. The protein is Neuronal acetylcholine receptor subunit alpha-7 (CHRNA7) of Gallus gallus (Chicken).